A 300-amino-acid chain; its full sequence is 17-beta-hydroxysteroid dehydrogenase 13 (300 aa).

Residues 1–19 (MNLILELLLLVGIIIYSYL) form the signal peptide. Ser-33 carries the phosphoserine modification. 40–67 (LITGAGHGIGRLTAYEFAKQKSRLVLWD) is a binding site for NAD(+). A Phosphoserine modification is found at Ser-69. Lys-79 is modified (N6-acetyllysine). Residue Ser-172 participates in substrate binding. The Proton acceptor role is filled by Tyr-185. Lys-189 is a binding site for NAD(+).

The protein belongs to the short-chain dehydrogenases/reductases (SDR) family.

The protein localises to the lipid droplet. It is found in the endoplasmic reticulum. It carries out the reaction 17beta-estradiol + NAD(+) = estrone + NADH + H(+). It catalyses the reaction all-trans-retinol + NAD(+) = all-trans-retinal + NADH + H(+). The enzyme catalyses all-trans-retinal + NAD(+) + H2O = all-trans-retinoate + NADH + 2 H(+). Its function is as follows. Plays a pivotal role in hepatic lipid metabolism. In vitro, it catalyzes the oxidation of a variety of lipid substrates, including 17beta-estradiol, retinol, retinal, and leukotriene B4. The chain is 17-beta-hydroxysteroid dehydrogenase 13 (Hsd17b13) from Rattus norvegicus (Rat).